The primary structure comprises 776 residues: MDSANARDCLLHLARAKLSERQDLVQLNDQFVDIIEHVHYMEAEHTALEHDYNLLKSGVQSDSSGINEIYNVEIRTVRSGIEEINRSRHELLNEQTQLSHQVKEAEQLWRHTAKSALGVPKEVDDEFHRICHIKMEDCITKRRIKYMEDKLRLIKQNNGRIFEHINLMRMRKDQAVSLQQEYLLRKNELLHSIRNMEEDNKKIIMNEHKYFVRDRNADRHVFRDQLRKAIADIRADYEANRLRNEEEIRIRLEREIHRMNTTMPGVVCYDKLREELSIVKNNLSGLQKQVSEVEIRNNSLTQQIEFYRLEISENNKLFEDTLEFKIKEIEKMREQCTAISVELEKLCDLNIDLQKEIAKYRELLDRSGDPRANAPSTQVIASALSRQNYSSISDHHSRTSSGIVQHTAHHAVRDSSSSRTGTTIHETITHTPIPIPATLPVQPIREYTYSRDASPIRPSYTPYQQESRADSRSSLRERIQIETLQGTLPVLPSHSVETIRASDNTRLVRDLSAGGQINTTQINNPYASRTPTSSVNDRIASERRDSEIRRNDALHQPYPIGGAVPRVEPTIFNERAPGYTHINSNFPLITPVTEGATVPSYYDTFNRNSSQRGPHHSSYHAATGSVSNSISTTLLNEGSIEHSSSSDSVDEDNFQRFTRWYKGRVKISDVTADFVQLVNRSSKKSADVGGFKLIHEFGNKSVYVDLPVGLILAPKDSLKIYARGATHERGAVIAEIDFFDTTIHTNTSIRNTNNEVKSWFVYTSNTEIGDADHHHH.

Positions 1-23 are head; the sequence is MDSANARDCLLHLARAKLSERQD. The region spanning 20–371 is the IF rod domain; it reads ERQDLVQLND…ELLDRSGDPR (352 aa). Positions 24-55 are coil 1A; sequence LVQLNDQFVDIIEHVHYMEAEHTALEHDYNLL. Residues 56–69 are linker 1; that stretch reads KSGVQSDSSGINEI. The tract at residues 70–207 is coil 1B; it reads YNVEIRTVRS…EDNKKIIMNE (138 aa). A linker 12 region spans residues 208 to 224; sequence HKYFVRDRNADRHVFRD. A coil 2 region spans residues 225 to 620; the sequence is QLRKAIADIR…QRGPHHSSYH (396 aa). 2 disordered regions span residues 453–473 and 518–544; these read ASPIRPSYTPYQQESRADSRS and NTTQINNPYASRTPTSSVNDRIASERR. The segment covering 518-536 has biased composition (polar residues); sequence NTTQINNPYASRTPTSSVN. A tail region spans residues 621-768; the sequence is AATGSVSNSI…WFVYTSNTEI (148 aa). The LTD domain maps to 653-764; it reads NFQRFTRWYK…EVKSWFVYTS (112 aa).

It belongs to the intermediate filament family.

The protein localises to the cytoplasm. Cytoplasmic intermediate filaments provide mechanical strength to cells. Not essential protein. This is Intermediate filament protein ifp-1 (ifp-1) from Caenorhabditis elegans.